Reading from the N-terminus, the 565-residue chain is Molybdenum cofactor biosynthesis protein 1 (565 aa).

Residues 3–367 (LLARHAIRLL…AVQRKKKQHA (365 aa)) form a molybdenum cofactor biosynthesis protein A region. The 213-residue stretch at 64 to 276 (SFGRHHTYLR…LQIIRQRWPD (213 aa)) folds into the Radical SAM core domain. Position 73 (arginine 73) interacts with GTP. 2 residues coordinate [4Fe-4S] cluster: cysteine 80 and cysteine 84. Tyrosine 86 provides a ligand contact to S-adenosyl-L-methionine. Position 87 (cysteine 87) interacts with [4Fe-4S] cluster. Arginine 123 is a GTP binding site. Glycine 127 contributes to the S-adenosyl-L-methionine binding site. Threonine 154 is a binding site for GTP. Serine 178 is a binding site for S-adenosyl-L-methionine. Lysine 214 provides a ligand contact to GTP. Residue methionine 248 coordinates S-adenosyl-L-methionine. Residues cysteine 311 and cysteine 314 each coordinate [4Fe-4S] cluster. 316–318 (RLR) is a GTP binding site. Cysteine 328 is a binding site for [4Fe-4S] cluster. Aspartate 525 functions as the For molybdenum cofactor biosynthesis protein C activity in the catalytic mechanism.

In the C-terminal section; belongs to the MoaC family. The protein in the N-terminal section; belongs to the radical SAM superfamily. MoaA family. In terms of assembly, isoform Mocs1a and isoform Mocs1b probably form a heterooligomer. [4Fe-4S] cluster serves as cofactor.

The enzyme catalyses GTP + AH2 + S-adenosyl-L-methionine = (8S)-3',8-cyclo-7,8-dihydroguanosine 5'-triphosphate + 5'-deoxyadenosine + L-methionine + A + H(+). It catalyses the reaction (8S)-3',8-cyclo-7,8-dihydroguanosine 5'-triphosphate = cyclic pyranopterin phosphate + diphosphate. It functions in the pathway cofactor biosynthesis; molybdopterin biosynthesis. Isoform Mocs1a and isoform Mocs1b probably form a complex that catalyzes the conversion of 5'-GTP to cyclic pyranopterin monophosphate (cPMP). Mocs1a catalyzes the cyclization of GTP to (8S)-3',8-cyclo-7,8-dihydroguanosine 5'-triphosphate and Mocs1b catalyzes the subsequent conversion of (8S)-3',8-cyclo-7,8-dihydroguanosine 5'-triphosphate to cPMP. The protein is Molybdenum cofactor biosynthesis protein 1 (Mocs1) of Drosophila melanogaster (Fruit fly).